The primary structure comprises 311 residues: Cytosolic Fe-S cluster assembly factor Nubp1 homolog (311 aa).

Positions 1 to 21 (MQAPPPEHCPGVESEDAGKGS) are disordered. 4 residues coordinate [4Fe-4S] cluster: C9, C23, C26, and C32. 63-70 (GKGGVGKS) provides a ligand contact to ATP. [4Fe-4S] cluster-binding residues include C240 and C243.

It belongs to the Mrp/NBP35 ATP-binding proteins family. NUBP1/NBP35 subfamily. As to quaternary structure, heterotetramer of 2 Nubp1 and 2 Nubp2 chains. The cofactor is [4Fe-4S] cluster.

It is found in the cytoplasm. Component of the cytosolic iron-sulfur (Fe/S) protein assembly (CIA) machinery. Required for maturation of extramitochondrial Fe-S proteins. The Nubp1-Nubp2 heterotetramer forms a Fe-S scaffold complex, mediating the de novo assembly of an Fe-S cluster and its transfer to target apoproteins. In Drosophila sechellia (Fruit fly), this protein is Cytosolic Fe-S cluster assembly factor Nubp1 homolog.